The chain runs to 1066 residues: MTSQEKVPFQVQLSLPQILSRRDWENPQITQYHRLEAHPPFHSWRDVESAQKDRPSPQQQTLNGLWSFSYFTQPEAVPEHWVRCDLAEAKPLPVPANWQLHGYDAPIYTNIQYPIPVNPPRVPDLNPTGCYSRDFTLEPSWLASGKTRIIFDGVSSAFYLWCNGQWVGYSQDSRLPAEFDLTPYLQAGSNRIAVLVLRWSDGSYLEDQDMWRMSGIFRDVKLLHKPEIHLRDIHIMTHLSPEFTSANLEVMAAVNIPSLQLNDPQVTGSYQLRVQLWLADKLVASLQQPLGTQAIDERGPYTDRTQLVLRIDQPLLWSAEQPTLYRAVVSLLNHQQELIEAEAYDVGFRQVAIHQGLLKINGKAVLIRGVNRHEHHPQTGQAIDEESLLQDILLMKQHNFNAVRCSHYPNHPLWYRLCDRYGLYVVDEANIETHGMQPMSRLSDDPSWFSAFSERVTRMVQRDRNHPCIIIWSLGNESGHGATHDALYRWIKTNDPTRPVQYEGGGANTLATDILCPMYARVDEDQPFPAVPKWSIKKWVGLPNESRPLILCEYAHAMGNSFGGFARYWQAFRQYPRLQGGFIWDWVDQSLTHHNDHGQPYWAYGGDFGDTPNDRQFCMNGLVFPDRSPHPSLYEAQCAQQFFQFSLLSTTPLVINITSEYLFRESDNEQLYWRIMLEGESMLEGSQPLNLSPESSQCYRLAEKLPTLNKPGQLWLNVEIRQPKETPWSPAQHRSAWHQWRLPQPLFSPSSDLTNATAHYAPQLQHNLQLQHNRQLQHDLQLQQDEQHIKVTYQQQCWQFSRQTGRLAQWWVADKPMLLRPLQDQFVRAPLDNDIGISEATHIDPNAWVERWKKAGMYQLQQRCLSLHVDHLSHSVQISAEYGYEFEQEPLLHSHWVYRFDRHGRMTIDVNVRIATSLPAPARIGMCCQLADISPTVDWLGLGPHENYPDRQLAAQYGHWSLPLEQMHTAYIFPSENGLRCNTHTLNYGRWTLTGDFHFGISRYSTQQLMVTSHQHLLEPEEGTWLNIDGFHMGVGGDDSWSPSVHIDDILTRETYQYQICWQYKV.

The substrate site is built by Asn110 and Asp209. Asp209 serves as a coordination point for Na(+). Residues Glu432, His434, and Glu477 each contribute to the Mg(2+) site. Residues Glu477 and 553-556 contribute to the substrate site; that span reads EYAH. The active-site Proton donor is Glu477. Glu553 acts as the Nucleophile in catalysis. Asn613 provides a ligand contact to Mg(2+). The Na(+) site is built by Phe617 and Asn620. Asn620 and Trp1041 together coordinate substrate.

It belongs to the glycosyl hydrolase 2 family. As to quaternary structure, homotetramer. The cofactor is Mg(2+). Na(+) serves as cofactor.

The catalysed reaction is Hydrolysis of terminal non-reducing beta-D-galactose residues in beta-D-galactosides.. This Yersinia pseudotuberculosis serotype O:1b (strain IP 31758) protein is Beta-galactosidase.